We begin with the raw amino-acid sequence, 334 residues long: Fructose-1,6-bisphosphatase class 1 2 (334 aa).

Mg(2+)-binding residues include glutamate 92, aspartate 114, leucine 116, and aspartate 117. Residues 117–120, asparagine 208, and lysine 274 each bind substrate; that span reads DGSS. Glutamate 280 contacts Mg(2+).

Belongs to the FBPase class 1 family. Homotetramer. Mg(2+) is required as a cofactor.

The protein localises to the cytoplasm. It catalyses the reaction beta-D-fructose 1,6-bisphosphate + H2O = beta-D-fructose 6-phosphate + phosphate. Its pathway is carbohydrate biosynthesis; gluconeogenesis. The polypeptide is Fructose-1,6-bisphosphatase class 1 2 (Albidiferax ferrireducens (strain ATCC BAA-621 / DSM 15236 / T118) (Rhodoferax ferrireducens)).